Here is a 325-residue protein sequence, read N- to C-terminus: Polyprenyl transferase mpaA (325 aa).

Transmembrane regions (helical) follow at residues 27–47, 56–76, and 108–128; these read MPYY…ALKL, VEYI…LCGA, and VEAL…LDLI. The N-linked (GlcNAc...) asparagine glycan is linked to N131. 6 helical membrane-spanning segments follow: residues 134–151, 159–179, 192–212, 240–260, 262–282, and 295–315; these read IWGL…YPYL, VFIY…ITGW, IFTH…YFNT, LFLA…VLKI, SPWL…MQIV, and IHWD…VEVG.

Belongs to the UbiA prenyltransferase family. Mg(2+) serves as cofactor.

Its subcellular location is the golgi apparatus membrane. The catalysed reaction is 5,7-dihydroxy-4-methylphthalide + (2E,6E)-farnesyl diphosphate = 4-farnesyl-3,5-dihydroxy-6-methylphthalide + diphosphate. It functions in the pathway secondary metabolite biosynthesis; terpenoid biosynthesis. Functionally, polyprenyl transferase; part of the gene cluster that mediates the biosynthesis of mycophenolic acid (MPA), the first isolated antibiotic natural product in the world obtained from a culture of Penicillium brevicompactum in 1893. MpaA is a Golgi apparatus-associated enzyme that catalyzes the prenylation of 5,7-dihydroxy-4,6-dimethylphthalide (DHMP) to yield farnesyl-DHMP (FDHMP). The first step of the pathway is the synthesis of 5-methylorsellinic acid (5MOA) by the cytosolic polyketide synthase mpaC. 5MOA is then converted to the phthalide compound 5,7-dihydroxy-4,6-dimethylphthalide (DHMP) by the endoplasmic reticulum-bound cytochrome P450 monooxygenase mpaDE. MpaDE first catalyzes hydroxylation of 5-MOA to 4,6-dihydroxy-2-(hydroxymethyl)-3-methylbenzoic acid (DHMB). MpaDE then acts as a lactone synthase that catalyzes the ring closure to convert DHMB into DHMP. The next step is the prenylation of DHMP by the Golgi apparatus-associated prenyltransferase mpaA to yield farnesyl-DHMP (FDHMP). The ER-bound oxygenase mpaB then mediates the oxidative cleavage the C19-C20 double bond in FDHMP to yield FDHMP-3C via a mycophenolic aldehyde intermediate. The O-methyltransferase mpaG catalyzes the methylation of FDHMP-3C to yield MFDHMP-3C. After the cytosolic methylation of FDHMP-3C, MFDHMP-3C enters into peroxisomes probably via free diffusion due to its low molecular weight. Upon a peroxisomal CoA ligation reaction, catalyzed by a beta-oxidation component enzyme acyl-CoA ligase ACL891, MFDHMP-3C-CoA would then be restricted to peroxisomes for the following beta-oxidation pathway steps. The peroxisomal beta-oxidation machinery than converts MFDHMP-3C-CoA into MPA_CoA, via a beta-oxidation chain-shortening process. Finally mpaH acts as a peroxisomal acyl-CoA hydrolase with high substrate specificity toward MPA-CoA to release the final product MPA. The sequence is that of Polyprenyl transferase mpaA from Penicillium roqueforti (strain FM164).